The sequence spans 432 residues: Trigger factor (432 aa).

Residues E161–P246 enclose the PPIase FKBP-type domain.

The protein belongs to the FKBP-type PPIase family. Tig subfamily.

The protein localises to the cytoplasm. The catalysed reaction is [protein]-peptidylproline (omega=180) = [protein]-peptidylproline (omega=0). In terms of biological role, involved in protein export. Acts as a chaperone by maintaining the newly synthesized protein in an open conformation. Functions as a peptidyl-prolyl cis-trans isomerase. The sequence is that of Trigger factor from Salmonella schwarzengrund (strain CVM19633).